We begin with the raw amino-acid sequence, 506 residues long: Cationic amino acid transporter 8 (506 aa).

N-linked (GlcNAc...) asparagine glycans are attached at residues N2 and N5. A helical transmembrane segment spans residues 38 to 58 (FYLLLIIIIYTATSACIYFDW). An N-linked (GlcNAc...) asparagine glycan is attached at N75. Helical transmembrane passes span 93 to 113 (NLYP…GFLY), 116 to 136 (IGPK…WIFL), 147 to 167 (LIGF…ILTV), 174 to 194 (ISTF…AVPA), and 211 to 231 (ICYG…TFLL). N277 carries an N-linked (GlcNAc...) asparagine glycan. Residues 302-322 (ILLFFKVLLSYPSICIIVYFI) traverse the membrane as a helical segment. N325 and N342 each carry an N-linked (GlcNAc...) asparagine glycan. 4 helical membrane passes run 344–364 (SIIN…IIFG), 372–392 (AAII…TALI), 399–419 (LISA…IYCF), and 427–447 (VVFG…SLFC). N-linked (GlcNAc...) asparagine glycosylation is found at N453 and N456. A helical membrane pass occupies residues 466–486 (TISILLAISFIIMFLPLSILY).

The protein belongs to the SLC43A transporter (TC 2.A.1.44) family.

Its subcellular location is the cell membrane. Functionally, cationic amino acid transporter which transports L-arginine, L-lysine and, to a lesser extent, L-histidine and ornithine. Plays an essential role in gametogenesis. This Plasmodium berghei (strain Anka) protein is Cationic amino acid transporter 8.